The sequence spans 545 residues: Chaperonin GroEL (545 aa).

ATP contacts are provided by residues 29-32 (TLGP), lysine 50, 86-90 (DGTTT), glycine 415, and aspartate 495.

It belongs to the chaperonin (HSP60) family. As to quaternary structure, forms a cylinder of 14 subunits composed of two heptameric rings stacked back-to-back. Interacts with the co-chaperonin GroES.

It localises to the cytoplasm. It carries out the reaction ATP + H2O + a folded polypeptide = ADP + phosphate + an unfolded polypeptide.. In terms of biological role, together with its co-chaperonin GroES, plays an essential role in assisting protein folding. The GroEL-GroES system forms a nano-cage that allows encapsulation of the non-native substrate proteins and provides a physical environment optimized to promote and accelerate protein folding. This is Chaperonin GroEL from Porphyromonas gingivalis (strain ATCC 33277 / DSM 20709 / CIP 103683 / JCM 12257 / NCTC 11834 / 2561).